The primary structure comprises 352 residues: B1 bradykinin receptor (352 aa).

Over 1-41 the chain is Extracellular; sequence MAAQTLLELQPSNQSQLSALNTTSCDNAREAWDLLYQVLPI. N-linked (GlcNAc...) asparagine glycans are attached at residues asparagine 13 and asparagine 21. Residues 42 to 62 form a helical membrane-spanning segment; that stretch reads FILTICAFGLLGNLFVLSVFL. Topologically, residues 63–72 are cytoplasmic; that stretch reads LLRRRLTVAE. A helical transmembrane segment spans residues 73–93; that stretch reads IYLVNLAASDLVFVLGLPFWA. The Extracellular portion of the chain corresponds to 94–110; the sequence is QNIWNQFNWPFGDLLCR. Cysteine 109 and cysteine 188 are joined by a disulfide. Residues 111–131 form a helical membrane-spanning segment; that stretch reads VVNGVIKANLFISIFLMVAIS. The Cytoplasmic portion of the chain corresponds to 132–153; the sequence is QDRYCVLVHPMASRRRRRRRRA. The helical transmembrane segment at 154–174 threads the bilayer; it reads RATCMVIWAVGALLSTPTFLL. The Extracellular portion of the chain corresponds to 175–206; it reads RSVSAVQDLNISACILLLPHQAWHVARIVELN. N-linked (GlcNAc...) asparagine glycosylation is present at asparagine 184. A helical membrane pass occupies residues 207 to 227; it reads VLGFLLPLAAIIFFNGHILAS. Topologically, residues 228-250 are cytoplasmic; sequence LRGQGEVSQTRIGGPKDCKTTVL. Residues 251 to 271 form a helical membrane-spanning segment; sequence ILTLVAAFLVCWAPYHCFAFL. The Extracellular segment spans residues 272-294; the sequence is EFLFQVRAVRGCFWEDFIDLGLQ. The helical transmembrane segment at 295 to 315 threads the bilayer; that stretch reads LANFFAFTNSCLNPVIYVFVG. Residues 316–326 lie on the Cytoplasmic side of the membrane; it reads RLFRTKVWELY. Cysteine 329 carries the S-palmitoyl cysteine lipid modification.

Belongs to the G-protein coupled receptor 1 family. Bradykinin receptor subfamily. BDKRB1 sub-subfamily.

The protein resides in the cell membrane. In terms of biological role, this is a receptor for bradykinin. Could be a factor in chronic pain and inflammation. The protein is B1 bradykinin receptor (BDKRB1) of Tupaia minor (Pigmy tree shrew).